The sequence spans 809 residues: Integrin beta pat-3 (809 aa).

The first 19 residues, 1–19 (MPPSTSLLLLAALLPFALP), serve as a signal peptide directing secretion. Residues 20-737 (ASDWKTGEVT…KHKDCPPPVP (718 aa)) lie on the Extracellular side of the membrane. N-linked (GlcNAc...) asparagine glycosylation is found at Asn47, Asn141, Asn269, Asn373, and Asn400. The VWFA domain maps to 153 to 352 (DLYYLMDLSY…IFAVTKNNQD (200 aa)). 15 disulfides stabilise this stretch: Cys476–Cys496, Cys489–Cys499, Cys501–Cys510, Cys512–Cys543, Cys526–Cys541, Cys535–Cys546, Cys548–Cys563, Cys565–Cys586, Cys570–Cys584, Cys578–Cys589, Cys591–Cys600, Cys602–Cys625, Cys609–Cys623, Cys617–Cys628, and Cys630–Cys644. I-EGF domains are found at residues 476–511 (CERQ…KYCE), 512–564 (CNRP…EFCE), 565–601 (CDNF…RACE), and 602–645 (CPIS…AKCE). A glycan (N-linked (GlcNAc...) asparagine) is linked at Asn530. Residues Asn672, Asn693, and Asn721 are each glycosylated (N-linked (GlcNAc...) asparagine). The chain crosses the membrane as a helical span at residues 738 to 758 (VLAIVLGVIAGIVILGILLLL). The Cytoplasmic portion of the chain corresponds to 759-809 (LWKLLTVLHDRSEYATFNNERLMAKWDTNENPIYKQATTTFKNPVYAGKAN). Tyr792 is modified (phosphotyrosine).

It belongs to the integrin beta chain family. Heterodimer of an alpha and a beta subunit. Interacts with alpha subunit ina-1. Interacts with alpha subunit pat-2. Component of an integrin containing attachment complex, composed of at least pat-2, pat-3, pat-4, pat-6, unc-52, unc-97 and unc-112. May interact with tns-1 (via C-terminus). Post-translationally, phosphorylated. Dephosphorylated by dep-1. Expressed in body wall muscles (at protein level). Expressed in gonadal sheath cells and spermatheca. Expressed in vulval cells and along the basal laminae that separate the vulval cells from the uterus (at the protein level).

It localises to the cell membrane. The protein resides in the lateral cell membrane. It is found in the basolateral cell membrane. The protein localises to the cytoplasm. Its subcellular location is the myofibril. It localises to the sarcomere. The protein resides in the m line. It is found in the cell junction. The protein localises to the focal adhesion. Integrin alpha ina-1/beta pat-3 is a receptor for laminin. Integrin alpha pat-2/beta pat-3 recognizes the sequence R-G-D in its ligands. Plays a role in cell migration, morphogenesis and probably in cell-cell interactions. During gonad morphogenesis, involved in distal tip cell (DTC)-mediated guidance of gonad elongation, in maintaining their sharp tapering morphology and in their migration. Component of an integrin containing attachment complex, which is required for muscle development and maintenance. Involved in the assembly of dense bodies and M lines during body wall muscle embryonic development by recruiting one of their components, cpna-1, to integrin-mediated attachment sites. May play a similar role in the assembly of dense bodies in gonadal myoepithelial sheath cells. Probably by acting as a receptor for apoptotic cells, plays a role in the clearance of apoptotic cells during mid-embryogenesis. Required for ovulation. Dephosphorylated, probably within the alpha pat-2/beta pat-3 integrin receptor complex, by the phosphatase dep-1, which leads to down-stream effects including the negative regulation of let-23 signaling and vulval induction. When unphosphosphorylated, recruits the cytoplasmic adapter protein tln-1 to the plasma membrane of secondary vulval precursor cells. This promotes the linking of focal adhesion sites to the F-actin cytoskeleton, and it also acts to restrict the mobility of the let-23 receptor on the plasma membrane of vulval cells which thereby attenuates let-23 signaling. Plays a role in axon regeneration after injury. In Caenorhabditis elegans, this protein is Integrin beta pat-3.